Here is a 127-residue protein sequence, read N- to C-terminus: Glycine cleavage system H protein (127 aa).

A Lipoyl-binding domain is found at 24 to 105; the sequence is TLTVGVTDHA…AYAAWLFKLK (82 aa). K65 carries the N6-lipoyllysine modification.

This sequence belongs to the GcvH family. In terms of assembly, the glycine cleavage system is composed of four proteins: P, T, L and H. It depends on (R)-lipoate as a cofactor.

Its function is as follows. The glycine cleavage system catalyzes the degradation of glycine. The H protein shuttles the methylamine group of glycine from the P protein to the T protein. This chain is Glycine cleavage system H protein, found in Azoarcus sp. (strain BH72).